A 999-amino-acid chain; its full sequence is Ulvan lyase, long isoform (999 aa).

The N-terminal stretch at 1-21 is a signal peptide; that stretch reads MKCLKTLLVSTTLLGAFSLNA. 126–127 serves as a coordination point for substrate; the sequence is SH. His127 serves as the catalytic Proton donor/acceptor. Positions 189, 199, and 201 each coordinate Ca(2+). The substrate site is built by Tyr280 and Arg297. Ca(2+)-binding residues include Asp300, Asp303, and Tyr305. Tyr361 provides a ligand contact to substrate.

Belongs to the polysaccharide lyase 24 family.

Ulvan lyase involved in ulvan degradation. Ulvan is the main polysaccharide component of the Ulvales (green seaweed) cell wall. It is composed of disaccharide building blocks comprising 3-sulfated rhamnose (Rha3S) linked to D-glucuronic acid (GlcA), L-iduronic acid (IduA), or D-xylose (Xyl). Ulvan lyase catalyzes preferentially the endolytic cleavage of the glycosidic bond between Rha3S and the uronic acid GlcA, but not IduA, producing oligosaccharides that have unsaturated 4-deoxy-L-threo-hex-4-enopyranosiduronic acid (deltaUA) at the non-reducing end. The most abundant end products in the degradation of the ulvan polysaccharide were deltaUA-Rha3S disaccharides and deltaUA-Rha3S-IduA-Rha3S and deltaUA-Rha3S-Xyl-Rha3S tetrasaccharides. This Alteromonas sp protein is Ulvan lyase, long isoform.